Here is a 614-residue protein sequence, read N- to C-terminus: UvrABC system protein C (614 aa).

In terms of domain architecture, GIY-YIG spans 26–104; that stretch reads NLPGVYKMLG…IKEHRPPYNV (79 aa). The UVR domain occupies 215–250; that stretch reads SDIHTTLIEKMEHSAEALDFEKAAFYRDQLSMLREV.

Belongs to the UvrC family. In terms of assembly, interacts with UvrB in an incision complex.

It is found in the cytoplasm. The UvrABC repair system catalyzes the recognition and processing of DNA lesions. UvrC both incises the 5' and 3' sides of the lesion. The N-terminal half is responsible for the 3' incision and the C-terminal half is responsible for the 5' incision. This Psychrobacter sp. (strain PRwf-1) protein is UvrABC system protein C.